Reading from the N-terminus, the 197-residue chain is FMN-dependent NADH:quinone oxidoreductase (197 aa).

Residues serine 10, 16–18, 93–96, and 137–140 each bind FMN; these read SQS, MYNF, and TRGG.

This sequence belongs to the azoreductase type 1 family. As to quaternary structure, homodimer. Requires FMN as cofactor.

The enzyme catalyses 2 a quinone + NADH + H(+) = 2 a 1,4-benzosemiquinone + NAD(+). The catalysed reaction is N,N-dimethyl-1,4-phenylenediamine + anthranilate + 2 NAD(+) = 2-(4-dimethylaminophenyl)diazenylbenzoate + 2 NADH + 2 H(+). In terms of biological role, quinone reductase that provides resistance to thiol-specific stress caused by electrophilic quinones. Its function is as follows. Also exhibits azoreductase activity. Catalyzes the reductive cleavage of the azo bond in aromatic azo compounds to the corresponding amines. This is FMN-dependent NADH:quinone oxidoreductase from Shewanella loihica (strain ATCC BAA-1088 / PV-4).